The sequence spans 100 residues: Small ribosomal subunit protein uS14c (100 aa).

This sequence belongs to the universal ribosomal protein uS14 family. Part of the 30S ribosomal subunit.

Its subcellular location is the plastid. It is found in the chloroplast. In terms of biological role, binds 16S rRNA, required for the assembly of 30S particles. The protein is Small ribosomal subunit protein uS14c of Platanus occidentalis (Sycamore).